Here is a 313-residue protein sequence, read N- to C-terminus: Potassium channel subfamily K member 6 (313 aa).

Residues 1-4 (MRRG) are Cytoplasmic-facing. The helical transmembrane segment at 5–25 (ALLASALAAYAGYLALGALLV) threads the bilayer. Residues asparagine 79 and asparagine 85 are each glycosylated (N-linked (GlcNAc...) asparagine). An intramembrane region (pore-forming) is located at residues 90 to 115 (AWDFASALFFASTLVTTVGYGYTTPL). Threonine 106, valine 107, glycine 108, and tyrosine 109 together coordinate K(+). Residues 106 to 111 (TVGYGY) are selectivity filter 1. A helical transmembrane segment spans residues 121 to 141 (AFSIVFALLGVPITMLLLTAS). Residues 142-172 (AQRLSLLLTHAPLSWLSLHWGWPPQRAARWH) are Cytoplasmic-facing. The chain crosses the membrane as a helical span at residues 173-193 (LVALLMVIVAIFFLVPAAVFA). The segment at residues 199 to 223 (WSFLDAFYFCFISLSTIGLGDYVPG) is an intramembrane region (pore-forming). Residues threonine 214, isoleucine 215, and glycine 216 each contribute to the K(+) site. Residues 214–219 (TIGLGD) are selectivity filter 2. The chain crosses the membrane as a helical span at residues 236–256 (VLVTAYLFLGLVAMVLVLQTF). Topologically, residues 257-313 (RRVSDLHGLTELILLPDPDPASLSQDEDDQVAVLDARTDLHQHLSAASHADYASIPR) are cytoplasmic. Short sequence motifs (lysosomal targeting signal) lie at residues 282–290 (DEDDQVAVL) and 308–312 (YASIP).

Belongs to the two pore domain potassium channel (TC 1.A.1.8) family. Homodimer; disulfide-linked. Post-translationally, N-glycosylation is necessary for targeting to lysosomes.

It localises to the late endosome membrane. It is found in the lysosome membrane. The enzyme catalyses K(+)(in) = K(+)(out). Functionally, k(+) channel that conducts outward rectifying currents at the membranes of the endolysosomal system. Active in lysosomes where it regulates lysosome numbers and size. In macrophages, enables K(+) efflux coupled to ATP-induced NLRP3 inflammasome activation upon bacterial infection. Cooperates with ATP-gated P2RX7 to activate NLRP3 inflammasome, with P2RX7 conducting Ca(2+) and Na(+) influx that sets the membrane potential for K(+) efflux. In Mus musculus (Mouse), this protein is Potassium channel subfamily K member 6.